Here is a 508-residue protein sequence, read N- to C-terminus: Photosystem II CP47 reaction center protein (508 aa).

The next 6 helical transmembrane spans lie at 21-36 (AVHLMHTALVSGWAGS), 101-115 (ILLSGALFMAAIWHW), 140-156 (GIHLFLSGLLCFGFGAF), 203-218 (IAAGILGILAGLFHLS), 237-252 (VLSSSIAAVFWAAFVV), and 457-472 (WFALLFFFGHIWHGAR).

The protein belongs to the PsbB/PsbC family. PsbB subfamily. PSII is composed of 1 copy each of membrane proteins PsbA, PsbB, PsbC, PsbD, PsbE, PsbF, PsbH, PsbI, PsbJ, PsbK, PsbL, PsbM, PsbT, PsbX, PsbY, PsbZ, Psb30/Ycf12, at least 3 peripheral proteins of the oxygen-evolving complex and a large number of cofactors. It forms dimeric complexes. It depends on Binds multiple chlorophylls. PSII binds additional chlorophylls, carotenoids and specific lipids. as a cofactor.

It localises to the plastid. Its subcellular location is the chloroplast thylakoid membrane. Functionally, one of the components of the core complex of photosystem II (PSII). It binds chlorophyll and helps catalyze the primary light-induced photochemical processes of PSII. PSII is a light-driven water:plastoquinone oxidoreductase, using light energy to abstract electrons from H(2)O, generating O(2) and a proton gradient subsequently used for ATP formation. The protein is Photosystem II CP47 reaction center protein of Nephroselmis olivacea (Green alga).